The sequence spans 172 residues: Large ribosomal subunit protein uL10 (172 aa).

This sequence belongs to the universal ribosomal protein uL10 family. As to quaternary structure, part of the ribosomal stalk of the 50S ribosomal subunit. The N-terminus interacts with L11 and the large rRNA to form the base of the stalk. The C-terminus forms an elongated spine to which L12 dimers bind in a sequential fashion forming a multimeric L10(L12)X complex.

In terms of biological role, forms part of the ribosomal stalk, playing a central role in the interaction of the ribosome with GTP-bound translation factors. The protein is Large ribosomal subunit protein uL10 of Francisella tularensis subsp. holarctica (strain FTNF002-00 / FTA).